The following is a 343-amino-acid chain: L-threonine 3-dehydrogenase (343 aa).

Position 40 (cysteine 40) interacts with Zn(2+). Active-site charge relay system residues include threonine 42 and histidine 45. Histidine 65, glutamate 66, cysteine 95, cysteine 98, cysteine 101, and cysteine 109 together coordinate Zn(2+). NAD(+) contacts are provided by residues isoleucine 177, aspartate 197, arginine 202, 264–266 (LGI), and 288–289 (IY).

The protein belongs to the zinc-containing alcohol dehydrogenase family. Homotetramer. It depends on Zn(2+) as a cofactor.

It localises to the cytoplasm. It carries out the reaction L-threonine + NAD(+) = (2S)-2-amino-3-oxobutanoate + NADH + H(+). Its pathway is amino-acid degradation; L-threonine degradation via oxydo-reductase pathway; glycine from L-threonine: step 1/2. Its function is as follows. Catalyzes the NAD(+)-dependent oxidation of L-threonine to 2-amino-3-ketobutyrate. This Vibrio parahaemolyticus serotype O3:K6 (strain RIMD 2210633) protein is L-threonine 3-dehydrogenase.